The sequence spans 491 residues: Protein DETOXIFICATION 20 (491 aa).

Transmembrane regions (helical) follow at residues 37-57, 75-95, 120-140, 156-176, 185-205, 214-234, 265-285, 296-316, 337-357, 381-401, 413-433, and 438-458; these read LWVVAAPAIFTRYSTFGVSMV, ITFTILLRFSNGILLGMAGAL, IVLTGGTICLMPVFIFAGPIL, LALWVIGINFSFVPSFTCQMF, IISYVTAVSLGLHVFFSWLLV, GAMTSMLIAFWLPIIVQLLYV, GGMLCLELWYNSVLVLLTGNL, AICISINALEMMIALGFLAAV, LIAVFTSLSIGIVLFFVFLFL, LLAFSILLNSVQPVLSGVAIG, LACYYLVGIPIGVILGYVVGL, and VWIGMLFGIFVQTCVLTVMTL.

The protein belongs to the multi antimicrobial extrusion (MATE) (TC 2.A.66.1) family.

It localises to the membrane. This Arabidopsis thaliana (Mouse-ear cress) protein is Protein DETOXIFICATION 20.